The primary structure comprises 436 residues: Lactonohydrolase oryL (436 aa).

An N-terminal signal peptide occupies residues 1 to 27 (MLSYTSHCLQALLGVASLPYRQYQAYS).

This sequence belongs to the SMP-30/CGR1 family.

Its pathway is secondary metabolite biosynthesis. In terms of biological role, lactonohydrolase; part of the gene cluster that mediates the biosynthesis of oryzines, natural products with an unusual maleidride backbone. The two subunits of the fungal fatty acid synthase oryfasA and oryfasB probably form octenoic acid. This fatty acid is most likely activated by the acyl-CoA ligase oryP to give octenyl-CoA before the citrate synthase-like protein oryE catalyzes condensation with oxaloacetate to form tricarboxylic acid. The next steps of the pathways are conjectural, but a favorite possible route has been proposed, beginning with decarboxylation and concomitant dehydration by the decarboxylase oryM, followed by tautomerization, which may lead to the production of a diene intermediate. Reduction of this diene intermediate could give the known metabolite piliformic acid. On the pathway to oryzine B and oryzine A, however, hydroxylation of the diene by the alpha-ketoglutarate-dependent dioxygenase oryG and lactonisation by the lactonohydrolases oryH or oryL could give oryzine B directly. Finally, enoyl reduction by the dehydrogenase oryD would then convert oryzine B into oryzine A. The protein is Lactonohydrolase oryL of Aspergillus oryzae (strain ATCC 42149 / RIB 40) (Yellow koji mold).